A 1275-amino-acid chain; its full sequence is Streptococcal hemoprotein receptor (1275 aa).

The first 26 residues, 1-26 (MKKISKCAFVAISALVLIQATQTVKS), serve as a signal peptide directing secretion. The segment at 61 to 123 (GKEYYKHIEK…KKDGDILITF (63 aa)) is HID 1. 4 residues coordinate heme: Thr87, Arg196, Tyr197, and Met238. The segment at 203-269 (IKALTQQITK…KGFEDVTITV (67 aa)) is HID 2. Residues 369 to 501 (LTEGTYTLNF…DMTFSKTVTK (133 aa)) enclose the NEAT 1 domain. LRR repeat units lie at residues 544-567 (LEQIRGELRLDHYELTDISLLKHA), 568-590 (KNITELHLDGNQITEIPKELFSQ), 592-614 (KQLRFLNLRSNHLTYLDKDTFKS), 616-638 (AQLRELYLSSNFIHSLEGGLFQS), 639-662 (LHHLEQLDLSKNRIGRLCDNPFEG), 664-686 (SRLTSLGFAENSLEEIPEKALEP), 687-710 (LTSLNFIDLSQNNLALLPKTIEKL), 712-733 (ALSTIVASRNHITRIDNISFKN), 734-757 (LPKLSVLDLSTNEISNLPNGIFKQ), 759-781 (NQLTKLDFFNNLLTQVEESVFPD), and 783-804 (ETLNLDVKFNQIKSVSPKVRAL). The region spanning 976-1138 (LRDGIYYLNA…TTEKAKVVKE (163 aa)) is the NEAT 2 domain. Disordered stretches follow at residues 1137–1174 (KETNNPQENSHLTSTDQLKGPQNRQQEKTPTSPPSAAT), 1186–1205 (KATGQSTQETSKTDDTDKAE), and 1210–1248 (LVRDHQTSIEGKTAKDTKTKKSDKKHRSNQQSNGEESSS). Positions 1138–1166 (ETNNPQENSHLTSTDQLKGPQNRQQEKTP) are enriched in polar residues. 2 stretches are compositionally biased toward basic and acidic residues: residues 1196 to 1205 (SKTDDTDKAE) and 1210 to 1229 (LVRDHQTSIEGKTAKDTKTK). A helical transmembrane segment spans residues 1250-1269 (YHLIAGLSSFMIVALGFIIG).

It is found in the cell membrane. With respect to regulation, may modulate heme uptake according to heme availability. In the presence of high heme concentrations, NEAT 1 facilitates fast heme delivery to Shp, whereas NEAT 2 serves as a temporary storage for heme on the bacterial surface. When heme availability is limiting, heme from NEAT 2 is transferred back to NEAT 1 and from there to Shp. Hemoprotein receptor that plays a central role in the acquisition of host heme, a source of iron during bacterial infection, and is therefore an important virulence factor. Captures host hemoproteins and their iron-containing heme molecules, and transfers the heme to the cell surface heme-binding protein Shp. Plays a pivotal role in iron acquisition and growth under iron-starvation conditions. Uses a cap and release mechanism in which Shr forms a dynamic complex with hemoglobin that enables the gated release of its most labile heme molecule. This mechanism exploits the hemoglobin beta subunit's inherent weaker affinity for heme, allowing S.pyogenes to preferentially capture only heme-saturated forms of hemoglobin that contain iron. In vitro, binds directly to a variety of heme-containing proteins, including hemoglobin, myoglobin, heme albumin and the hemoglobin-haptoglobin complex. It also binds to and acquires heme from methemoglobin, the ferric form of hemoglobin, which is likely to be a physiologically relevant heme source for the hemolytic group A streptococcus (GAS). Seems to have an inherent ability to reduce the ferric heme present in methemoglobin to ferrous heme and to provide a stable environment for the produced ferrous complex. Does not bind apohemoglobin, apohaptoglobin, fibrinogen or streptavidin, indicating that it specifically recognizes hemoproteins. Functionally, in addition to its role in heme acquisition, functions as an adhesin, contributing to host cell adhesion and hence virulence. Specifically binds to extracellular matrix (ECM) components, including fibronectin and laminin, and mediates bacterial attachment to host epithelial cells. In Streptococcus pyogenes serotype M1, this protein is Streptococcal hemoprotein receptor.